Consider the following 200-residue polypeptide: Probable GTP-binding protein EngB (200 aa).

One can recognise an EngB-type G domain in the interval 22–195 (GKDEIAFVGR…INNICSGINY (174 aa)). GTP is bound by residues 30–37 (GRSNVGKS), 57–61 (GKTRL), 75–78 (DLPG), 142–145 (TKSD), and 174–176 (FSS). Mg(2+) is bound by residues Ser-37 and Thr-59.

Belongs to the TRAFAC class TrmE-Era-EngA-EngB-Septin-like GTPase superfamily. EngB GTPase family. Mg(2+) serves as cofactor.

Its function is as follows. Necessary for normal cell division and for the maintenance of normal septation. The protein is Probable GTP-binding protein EngB of Clostridium acetobutylicum (strain ATCC 824 / DSM 792 / JCM 1419 / IAM 19013 / LMG 5710 / NBRC 13948 / NRRL B-527 / VKM B-1787 / 2291 / W).